An 85-amino-acid chain; its full sequence is uncharacterized protein (85 aa).

The protein belongs to the ycf76 family.

The protein localises to the plastid. The protein resides in the chloroplast. This is an uncharacterized protein from Saccharum hybrid (Sugarcane).